A 93-amino-acid chain; its full sequence is uncharacterized protein (93 aa).

3 consecutive transmembrane segments (helical) span residues 9–29 (ITVI…PQLI), 40–60 (ISLA…IYGI), and 66–86 (PIIV…YLKI).

It is found in the cell membrane. This is an uncharacterized protein from Methanocaldococcus jannaschii (strain ATCC 43067 / DSM 2661 / JAL-1 / JCM 10045 / NBRC 100440) (Methanococcus jannaschii).